Consider the following 343-residue polypeptide: ATP-dependent (S)-NAD(P)H-hydrate dehydratase (343 aa).

The transit peptide at Met-1–Ala-42 directs the protein to the mitochondrion. The region spanning Leu-49–Leu-340 is the YjeF C-terminal domain. Lys-63 bears the N6-acetyllysine mark. The residue at position 81 (Tyr-81) is a Phosphotyrosine. (6S)-NADPHX-binding positions include Gly-149 and Asn-202–Arg-208. ATP-binding positions include Lys-242–Asp-246 and Gly-261–Gly-270. (6S)-NADPHX is bound at residue Asp-271.

The protein belongs to the NnrD/CARKD family. The cofactor is Mg(2+).

It is found in the mitochondrion. It carries out the reaction (6S)-NADHX + ATP = ADP + phosphate + NADH + H(+). The catalysed reaction is (6S)-NADPHX + ATP = ADP + phosphate + NADPH + H(+). Functionally, catalyzes the dehydration of the S-form of NAD(P)HX at the expense of ATP, which is converted to ADP. Together with NAD(P)HX epimerase, which catalyzes the epimerization of the S- and R-forms, the enzyme allows the repair of both epimers of NAD(P)HX, a damaged form of NAD(P)H that is a result of enzymatic or heat-dependent hydration. The sequence is that of ATP-dependent (S)-NAD(P)H-hydrate dehydratase from Rattus norvegicus (Rat).